Here is a 199-residue protein sequence, read N- to C-terminus: ATP-dependent Clp protease proteolytic subunit (199 aa).

Serine 97 serves as the catalytic Nucleophile. The active site involves histidine 122.

Belongs to the peptidase S14 family. In terms of assembly, fourteen ClpP subunits assemble into 2 heptameric rings which stack back to back to give a disk-like structure with a central cavity, resembling the structure of eukaryotic proteasomes.

The protein resides in the cytoplasm. It carries out the reaction Hydrolysis of proteins to small peptides in the presence of ATP and magnesium. alpha-casein is the usual test substrate. In the absence of ATP, only oligopeptides shorter than five residues are hydrolyzed (such as succinyl-Leu-Tyr-|-NHMec, and Leu-Tyr-Leu-|-Tyr-Trp, in which cleavage of the -Tyr-|-Leu- and -Tyr-|-Trp bonds also occurs).. Cleaves peptides in various proteins in a process that requires ATP hydrolysis. Has a chymotrypsin-like activity. Plays a major role in the degradation of misfolded proteins. The chain is ATP-dependent Clp protease proteolytic subunit from Pelobacter propionicus (strain DSM 2379 / NBRC 103807 / OttBd1).